Reading from the N-terminus, the 170-residue chain is dCTP pyrophosphatase 1 (170 aa).

The disordered stretch occupies residues 1–25 (MSQAGTGVCGNGGQEDSAAAGPFSF). S2 carries the post-translational modification N-acetylserine. A Phosphoserine modification is found at S2. Residues H38 and 47–51 (WEQFH) each bind substrate. 2 residues coordinate Mg(2+): E63 and E66. W73 serves as a coordination point for substrate. The Mg(2+) site is built by E95 and D98. Y102 provides a ligand contact to substrate. The segment at 149 to 170 (LSENEAVGSGDPASELGNQAST) is disordered.

Homotetramer. Mg(2+) serves as cofactor.

The protein resides in the cytoplasm. The protein localises to the cytosol. It carries out the reaction dCTP + H2O = dCMP + diphosphate + H(+). Functionally, hydrolyzes deoxynucleoside triphosphates (dNTPs) to the corresponding nucleoside monophosphates. Has a strong preference for dCTP and its analogs including 5-iodo-dCTP and 5-methyl-dCTP for which it may even have a higher efficiency. May protect DNA or RNA against the incorporation of these genotoxic nucleotide analogs through their catabolism. The polypeptide is dCTP pyrophosphatase 1 (Rattus norvegicus (Rat)).